The chain runs to 214 residues: Metalloproteinase inhibitor 3 (214 aa).

A signal peptide spans 1-26 (MVFSTTAALSLLLALSSMQLSEVSEA). Cys27 is a binding site for Zn(2+). Involved in metalloproteinase-binding regions lie at residues 27–30 (CTCM) and 91–92 (ES). 6 disulfides stabilise this stretch: Cys27–Cys94, Cys29–Cys121, Cys39–Cys146, Cys148–Cys195, Cys153–Cys158, and Cys166–Cys187. The NTR domain maps to 27–146 (CTCMPNHPQE…GLNHRYQYGC (120 aa)). An N-linked (GlcNAc...) asparagine glycan is attached at Asn210.

Belongs to the protease inhibitor I35 (TIMP) family. In terms of tissue distribution, expressed abundantly in brain and cartilage.

The protein localises to the secreted. The protein resides in the extracellular space. It is found in the extracellular matrix. Functionally, complexes with metalloproteinases (such as collagenases) and irreversibly inactivates them by binding to their catalytic zinc cofactor. May form part of a tissue-specific acute response to remodeling stimuli. This is Metalloproteinase inhibitor 3 (TIMP3) from Scyliorhinus torazame (Cloudy catshark).